The sequence spans 423 residues: Imidazolonepropionase (423 aa).

Residues His-78 and His-80 each coordinate Fe(3+). Positions 78 and 80 each coordinate Zn(2+). 4-imidazolone-5-propanoate-binding residues include Arg-87, Tyr-150, and His-183. Tyr-150 contacts N-formimidoyl-L-glutamate. His-247 serves as a coordination point for Fe(3+). His-247 contacts Zn(2+). Residue Glu-250 coordinates 4-imidazolone-5-propanoate. Asp-322 contacts Fe(3+). Asp-322 provides a ligand contact to Zn(2+). N-formimidoyl-L-glutamate contacts are provided by Asn-324 and Gly-326. Residue Ser-327 coordinates 4-imidazolone-5-propanoate.

It belongs to the metallo-dependent hydrolases superfamily. HutI family. Zn(2+) is required as a cofactor. Requires Fe(3+) as cofactor.

It is found in the cytoplasm. It carries out the reaction 4-imidazolone-5-propanoate + H2O = N-formimidoyl-L-glutamate. It participates in amino-acid degradation; L-histidine degradation into L-glutamate; N-formimidoyl-L-glutamate from L-histidine: step 3/3. In terms of biological role, catalyzes the hydrolytic cleavage of the carbon-nitrogen bond in imidazolone-5-propanoate to yield N-formimidoyl-L-glutamate. It is the third step in the universal histidine degradation pathway. This is Imidazolonepropionase from Bacillus cereus (strain B4264).